Reading from the N-terminus, the 478-residue chain is Ribulose bisphosphate carboxylase large chain (478 aa).

Positions 1 to 2 (MS) are excised as a propeptide. At Pro3 the chain carries N-acetylproline. N6,N6,N6-trimethyllysine is present on Lys14. Asn123 and Thr173 together coordinate substrate. Lys175 serves as the catalytic Proton acceptor. Lys177 contacts substrate. Residues Lys201, Asp203, and Glu204 each coordinate Mg(2+). Lys201 bears the N6-carboxylysine mark. His294 serves as the catalytic Proton acceptor. Substrate contacts are provided by Arg295, His327, and Ser379.

It belongs to the RuBisCO large chain family. Type I subfamily. Heterohexadecamer of 8 large chains and 8 small chains; disulfide-linked. The disulfide link is formed within the large subunit homodimers. It depends on Mg(2+) as a cofactor. Post-translationally, the disulfide bond which can form in the large chain dimeric partners within the hexadecamer appears to be associated with oxidative stress and protein turnover.

It localises to the plastid. The protein localises to the chloroplast. The enzyme catalyses 2 (2R)-3-phosphoglycerate + 2 H(+) = D-ribulose 1,5-bisphosphate + CO2 + H2O. It catalyses the reaction D-ribulose 1,5-bisphosphate + O2 = 2-phosphoglycolate + (2R)-3-phosphoglycerate + 2 H(+). Its function is as follows. RuBisCO catalyzes two reactions: the carboxylation of D-ribulose 1,5-bisphosphate, the primary event in carbon dioxide fixation, as well as the oxidative fragmentation of the pentose substrate in the photorespiration process. Both reactions occur simultaneously and in competition at the same active site. The chain is Ribulose bisphosphate carboxylase large chain from Neurachne munroi.